A 395-amino-acid chain; its full sequence is Chalcone synthase (395 aa).

An N-acetylvaline modification is found at V2. An N-acetylalanine modification is found at V2. C169 is an active-site residue.

This sequence belongs to the thiolase-like superfamily. Chalcone/stilbene synthases family.

The enzyme catalyses (E)-4-coumaroyl-CoA + 3 malonyl-CoA + 3 H(+) = 2',4,4',6'-tetrahydroxychalcone + 3 CO2 + 4 CoA. The protein operates within secondary metabolite biosynthesis; flavonoid biosynthesis. Its function is as follows. The primary product of this enzyme is 4,2',4',6'-tetrahydroxychalcone (also termed naringenin-chalcone or chalcone) which can under specific conditions spontaneously isomerize into naringenin. This chain is Chalcone synthase (CHS), found in Arabidopsis thaliana (Mouse-ear cress).